Here is a 175-residue protein sequence, read N- to C-terminus: Probable chemoreceptor glutamine deamidase CheD (175 aa).

This sequence belongs to the CheD family.

The enzyme catalyses L-glutaminyl-[protein] + H2O = L-glutamyl-[protein] + NH4(+). Functionally, probably deamidates glutamine residues to glutamate on methyl-accepting chemotaxis receptors (MCPs), playing an important role in chemotaxis. This chain is Probable chemoreceptor glutamine deamidase CheD, found in Jannaschia sp. (strain CCS1).